Consider the following 446-residue polypeptide: Trigger factor (446 aa).

One can recognise a PPIase FKBP-type domain in the interval 163–248 (GDIVTIDFKG…VRGIKRKKLA (86 aa)). The tract at residues 423 to 446 (SKPVPPREQGAAGETAETAEATPA) is disordered. The segment covering 432 to 446 (GAAGETAETAEATPA) has biased composition (low complexity).

The protein belongs to the FKBP-type PPIase family. Tig subfamily.

The protein resides in the cytoplasm. The enzyme catalyses [protein]-peptidylproline (omega=180) = [protein]-peptidylproline (omega=0). In terms of biological role, involved in protein export. Acts as a chaperone by maintaining the newly synthesized protein in an open conformation. Functions as a peptidyl-prolyl cis-trans isomerase. This chain is Trigger factor, found in Moorella thermoacetica (strain ATCC 39073 / JCM 9320).